The chain runs to 285 residues: Transcription factor E2F6 (285 aa).

Residue Lys-9 forms a Glycyl lysine isopeptide (Lys-Gly) (interchain with G-Cter in SUMO2) linkage. Residues 50-129 (YVSMRKALKV…SKNHIRWIGS (80 aa)) mediate DNA binding. Residues 95–129 (KLGVRKRRVYDITNVLDGIDLVEKKSKNHIRWIGS) carry the DEF box motif. The interval 130 to 222 (DLSNFGAVPQ…PAPKEDSITV (93 aa)) is dimerization. A leucine-zipper region spans residues 143–164 (LQEELSDLSAMEDALDELIKDC). The tract at residues 173 to 285 (DDKENERLAY…QSEEVLEVSN (113 aa)) is transcription repression. Positions 240–285 (QGSHSSNKTSDNVGTSSSKSKPLEHPQPEKEENPPQQSEEVLEVSN) are disordered. Polar residues predominate over residues 241 to 259 (GSHSSNKTSDNVGTSSSKS). The span at 260–272 (KPLEHPQPEKEEN) shows a compositional bias: basic and acidic residues.

It belongs to the E2F/DP family. Forms heterodimers with DP family members TFDP1 or TFDP2. Component of the DRTF1/E2F transcription factor complex. Part of the E2F6.com-1 complex in G0 phase composed of E2F6, MGA, MAX, TFDP1, CBX3, BAT8, EUHMTASE1, RING1, RNF2, MBLR, L3MBTL2 and YAF2. Component of some MLL1/MLL complex, at least composed of the core components KMT2A/MLL1, ASH2L, HCFC1/HCF1, WDR5 and RBBP5, as well as the facultative components BACC1, CHD8, E2F6, HSP70, INO80C, KANSL1, LAS1L, MAX, MCRS1, MGA, KAT8/MOF, PELP1, PHF20, PRP31, RING2, RUVB1/TIP49A, RUVB2/TIP49B, SENP3, TAF1, TAF4, TAF6, TAF7, TAF9 and TEX10.

Its subcellular location is the nucleus. In terms of biological role, inhibitor of E2F-dependent transcription. Binds DNA cooperatively with DP proteins through the E2 recognition site, 5'-TTTC[CG]CGC-3'. Has a preference for the 5'-TTTCCCGC-3' E2F recognition site. E2F6 lacks the transcriptional activation and pocket protein binding domains. Appears to regulate a subset of E2F-dependent genes whose products are required for entry into the cell cycle but not for normal cell cycle progression. Represses expression of some meiosis-specific genes, including SLC25A31/ANT4. May silence expression via the recruitment of a chromatin remodeling complex containing histone H3-K9 methyltransferase activity. Overexpression delays the exit of cells from the S-phase. The chain is Transcription factor E2F6 from Bos taurus (Bovine).